The sequence spans 295 residues: Lipoyl synthase (295 aa).

[4Fe-4S] cluster-binding residues include Cys34, Cys39, Cys45, Cys60, Cys64, Cys67, and Ser273. Residues 46–262 form the Radical SAM core domain; it reads WNKRHATIMI…KLMAYAKGFS (217 aa).

The protein belongs to the radical SAM superfamily. Lipoyl synthase family. Requires [4Fe-4S] cluster as cofactor.

The protein resides in the cytoplasm. It catalyses the reaction [[Fe-S] cluster scaffold protein carrying a second [4Fe-4S](2+) cluster] + N(6)-octanoyl-L-lysyl-[protein] + 2 oxidized [2Fe-2S]-[ferredoxin] + 2 S-adenosyl-L-methionine + 4 H(+) = [[Fe-S] cluster scaffold protein] + N(6)-[(R)-dihydrolipoyl]-L-lysyl-[protein] + 4 Fe(3+) + 2 hydrogen sulfide + 2 5'-deoxyadenosine + 2 L-methionine + 2 reduced [2Fe-2S]-[ferredoxin]. The protein operates within protein modification; protein lipoylation via endogenous pathway; protein N(6)-(lipoyl)lysine from octanoyl-[acyl-carrier-protein]: step 2/2. Functionally, catalyzes the radical-mediated insertion of two sulfur atoms into the C-6 and C-8 positions of the octanoyl moiety bound to the lipoyl domains of lipoate-dependent enzymes, thereby converting the octanoylated domains into lipoylated derivatives. In Anaplasma marginale (strain St. Maries), this protein is Lipoyl synthase.